Reading from the N-terminus, the 146-residue chain is Acetyl-CoA decarbonylase/synthase complex subunit epsilon (146 aa).

The protein belongs to the CdhB family. In terms of assembly, heterotetramer of two alpha and two epsilon subunits. The ACDS complex is made up of alpha, epsilon, beta, gamma and delta subunits with a probable stoichiometry of (alpha(2)epsilon(2))(4)-beta(8)-(gamma(1)delta(1))(8).

Part of a complex that catalyzes the reversible cleavage of acetyl-CoA, allowing autotrophic growth from CO(2). The alpha-epsilon subcomponent functions as a carbon monoxide dehydrogenase. The precise role of the epsilon subunit is unclear; it may have a stabilizing role within the alpha(2)epsilon(2) component and/or be involved in electron transfer to FAD during a potential FAD-mediated CO oxidation. This Methanocaldococcus jannaschii (strain ATCC 43067 / DSM 2661 / JAL-1 / JCM 10045 / NBRC 100440) (Methanococcus jannaschii) protein is Acetyl-CoA decarbonylase/synthase complex subunit epsilon.